The chain runs to 466 residues: Trigger factor (466 aa).

The region spanning 162–243 (GDVVSIDLSA…VRSVKERELP (82 aa)) is the PPIase FKBP-type domain. The disordered stretch occupies residues 428 to 466 (GNTIDTSEFFGKRVSAGEAEEAEPADEGAARAASDEATT). The segment covering 457 to 466 (ARAASDEATT) has biased composition (low complexity).

This sequence belongs to the FKBP-type PPIase family. Tig subfamily.

The protein localises to the cytoplasm. It carries out the reaction [protein]-peptidylproline (omega=180) = [protein]-peptidylproline (omega=0). Its function is as follows. Involved in protein export. Acts as a chaperone by maintaining the newly synthesized protein in an open conformation. Functions as a peptidyl-prolyl cis-trans isomerase. This chain is Trigger factor, found in Mycobacterium tuberculosis (strain ATCC 25177 / H37Ra).